We begin with the raw amino-acid sequence, 254 residues long: 14-3-3-like protein GF14 epsilon (254 aa).

Phosphoserine is present on residues Ser-65 and Ser-188.

Belongs to the 14-3-3 family. As to quaternary structure, interacts with DREB1A and DREB1B in the nucleus. Interacts with CINV1.

It is found in the nucleus. Its subcellular location is the cytoplasm. Its function is as follows. Is associated with a DNA binding complex that binds to the G box, a well-characterized cis-acting DNA regulatory element found in plant genes. The polypeptide is 14-3-3-like protein GF14 epsilon (GRF10) (Arabidopsis thaliana (Mouse-ear cress)).